The primary structure comprises 239 residues: Adapter protein MecA (239 aa).

Basic and acidic residues predominate over residues E118–G128. The segment at E118–R137 is disordered.

It belongs to the MecA family. In terms of assembly, homodimer.

Functionally, enables the recognition and targeting of unfolded and aggregated proteins to the ClpC protease or to other proteins involved in proteolysis. The protein is Adapter protein MecA of Staphylococcus aureus (strain bovine RF122 / ET3-1).